The sequence spans 185 residues: ATP-dependent protease subunit HslV (185 aa).

Residue Thr12 is part of the active site. The Na(+) site is built by Ala168, Cys171, and Thr174.

This sequence belongs to the peptidase T1B family. HslV subfamily. A double ring-shaped homohexamer of HslV is capped on each side by a ring-shaped HslU homohexamer. The assembly of the HslU/HslV complex is dependent on binding of ATP.

The protein localises to the cytoplasm. The enzyme catalyses ATP-dependent cleavage of peptide bonds with broad specificity.. With respect to regulation, allosterically activated by HslU binding. Its function is as follows. Protease subunit of a proteasome-like degradation complex believed to be a general protein degrading machinery. The sequence is that of ATP-dependent protease subunit HslV from Cereibacter sphaeroides (strain ATCC 17025 / ATH 2.4.3) (Rhodobacter sphaeroides).